We begin with the raw amino-acid sequence, 376 residues long: Calcium uniporter protein, mitochondrial (376 aa).

The N-terminal 34 residues, methionine 1 to histidine 34, are a transit peptide targeting the mitochondrion. The Mitochondrial matrix portion of the chain corresponds to glutamine 35–threonine 257. Positions valine 99–arginine 189 are N-terminal MCU domain. Residues threonine 213–arginine 254 are a coiled coil. Residues tryptophan 258 to tryptophan 280 traverse the membrane as a helical segment. At glutamate 281–proline 289 the chain is on the mitochondrial intermembrane side. The Selectivity filter signature appears at tryptophan 284 to tyrosine 292. Ca(2+) is bound at residue glutamate 288. Residues valine 290 to threonine 309 traverse the membrane as a helical segment. The tract at residues threonine 309 to leucine 314 is juxtamembrane helix. Residues arginine 310–aspartate 376 are Mitochondrial matrix-facing. A coiled-coil region spans residues phenylalanine 336 to glutamine 363.

It belongs to the MCU (TC 1.A.77) family. As to quaternary structure, homotetramer. Component of the uniplex complex.

Its subcellular location is the mitochondrion inner membrane. The enzyme catalyses Ca(2+)(in) = Ca(2+)(out). With respect to regulation, MCU channel activity is regulated by the heterodimer composed of micu1 and micu2, which act as calcium-sensors. At low calcium levels, micu1 occludes the pore of the MCU channel, preventing mitochondrial calcium uptake. At higher calcium levels, calcium-binding to micu1 and micu2 induces a conformational change that weakens mcu-micu1 interactions and moves the micu1-micu2 heterodimer away from the pore, allowing calcium permeation through the channel. MCU channel activity is gated by emre/smdt1 via the juxtamembrane helix loop. Inhibited by ruthenium red or its derivative Ru360. Functionally, channel-forming and calcium-conducting subunit of the mitochondrial inner membrane calcium uniporter complex (uniplex), which mediates calcium uptake into the mitochondrial matrix. Mcu channel activity is regulated by the calcium-sensor subunits of the uniplex micu1 and micu2. Mitochondrial calcium homeostasis plays key roles in cellular physiology and regulates ATP production, cytoplasmic calcium signals and activation of cell death pathways. Involved in buffering the amplitude of systolic calcium rises in cardiomyocytes. While dispensable for baseline homeostatic cardiac function, acts as a key regulator of short-term mitochondrial calcium loading underlying a 'fight-or-flight' response during acute stress: acts by mediating a rapid increase of mitochondrial calcium in pacemaker cells. Mitochondrial calcium uptake in skeletal muscle cells is involved in muscle size in adults. In Danio rerio (Zebrafish), this protein is Calcium uniporter protein, mitochondrial.